We begin with the raw amino-acid sequence, 140 residues long: Ribosome-binding factor A (140 aa).

A disordered region spans residues 115–140 (EDERQQRGDIPPGSDQQPGSDEQPTG). The segment covering 128–140 (SDQQPGSDEQPTG) has biased composition (polar residues).

This sequence belongs to the RbfA family. As to quaternary structure, monomer. Binds 30S ribosomal subunits, but not 50S ribosomal subunits or 70S ribosomes.

Its subcellular location is the cytoplasm. Functionally, one of several proteins that assist in the late maturation steps of the functional core of the 30S ribosomal subunit. Associates with free 30S ribosomal subunits (but not with 30S subunits that are part of 70S ribosomes or polysomes). Required for efficient processing of 16S rRNA. May interact with the 5'-terminal helix region of 16S rRNA. This Synechococcus sp. (strain CC9605) protein is Ribosome-binding factor A.